The chain runs to 64 residues: Large ribosomal subunit protein uL29 (64 aa).

The protein belongs to the universal ribosomal protein uL29 family.

The sequence is that of Large ribosomal subunit protein uL29 from Teredinibacter turnerae (strain ATCC 39867 / T7901).